Here is a 185-residue protein sequence, read N- to C-terminus: Ribosome maturation factor RimM (185 aa).

The 77-residue stretch at 92–168 folds into the PRC barrel domain; that stretch reads DDDTFYHADL…GRRVVVAEAF (77 aa).

This sequence belongs to the RimM family. As to quaternary structure, binds ribosomal protein uS19.

It is found in the cytoplasm. Functionally, an accessory protein needed during the final step in the assembly of 30S ribosomal subunit, possibly for assembly of the head region. Essential for efficient processing of 16S rRNA. May be needed both before and after RbfA during the maturation of 16S rRNA. It has affinity for free ribosomal 30S subunits but not for 70S ribosomes. This chain is Ribosome maturation factor RimM, found in Xanthobacter autotrophicus (strain ATCC BAA-1158 / Py2).